We begin with the raw amino-acid sequence, 2618 residues long: Mediator of RNA polymerase II transcription subunit 13 (2618 aa).

Low complexity-rich tracts occupy residues 232–255 (FAAA…VPNP), 509–519 (TPASGTGSLSA), and 532–543 (DSKQLVQQQIQQ). Disordered stretches follow at residues 232 to 279 (FAAA…AAPP), 509 to 543 (TPAS…QIQQ), 569 to 731 (GNTP…SGGP), 916 to 957 (LNIK…AEGL), 970 to 995 (TSSN…NGGC), 1036 to 1055 (TKMF…SSPC), 1268 to 1384 (PRTP…TGVV), 1521 to 1557 (ASAS…ITGY), 1614 to 1633 (SRKN…LDKI), and 1985 to 2060 (KTLL…GETK). A phosphothreonine mark is found at threonine 571 and threonine 575. Composition is skewed to polar residues over residues 581–590 (STYSRNSLGG), 634–643 (APTSVSNLQQ), and 669–681 (SITA…QTPS). Residues 692–706 (AGGGPAGGQGLGTGP) are compositionally biased toward gly residues. A compositionally biased stretch (low complexity) spans 711–723 (AQQPATPTAATSA). Residues 939–949 (NSSGGGSGSGG) are compositionally biased toward gly residues. The span at 1272-1295 (LTPSTVPQPLSSGGSQYLLNQLNC) shows a compositional bias: polar residues. 2 stretches are compositionally biased toward gly residues: residues 1375–1384 (GLGGGATGVV) and 1528–1538 (AGSGHGHGPNG). Positions 1539–1553 (GSNSSSCTPPSSNPH) are enriched in low complexity. The segment covering 1614–1629 (SRKNQNKQGPGETSSA) has biased composition (polar residues). A compositionally biased stretch (low complexity) spans 1993–2014 (GSGNSHSKGGSSCSSNSSSVSG). Phosphoserine occurs at positions 2472 and 2475.

It belongs to the Mediator complex subunit 13 family. In terms of assembly, component of the Cdk8 module of the Mediator complex, composed of CycC, Cdk8, kto and skd.

It localises to the nucleus. Component of the Mediator complex, a coactivator involved in the regulated transcription of nearly all RNA polymerase II-dependent genes. Mediator functions as a bridge to convey information from gene-specific regulatory proteins to the basal RNA polymerase II transcription machinery. Mediator is recruited to promoters by direct interactions with regulatory proteins and serves as a scaffold for the assembly of a functional preinitiation complex with RNA polymerase II and the general transcription factors. Required for leg and eye development and macrochaete specification or differentiation. Negatively regulates sex comb development. Required for activated transcription of the MtnB and MtnD genes. The sequence is that of Mediator of RNA polymerase II transcription subunit 13 (skd) from Drosophila melanogaster (Fruit fly).